We begin with the raw amino-acid sequence, 251 residues long: Lactose phosphotransferase system repressor (251 aa).

Positions 3 to 58 (KEERLEEITKLINKRGTIRVTEVVERLKVSDMTVRRDLTELEGLGVLTRIHGGARS) constitute an HTH deoR-type domain. Positions 20 to 39 (IRVTEVVERLKVSDMTVRRD) form a DNA-binding region, H-T-H motif.

In terms of biological role, repressor of the lactose catabolism operon. Galactose-6-phosphate is the inducer. This Streptococcus mutans serotype c (strain ATCC 700610 / UA159) protein is Lactose phosphotransferase system repressor (lacR).